The chain runs to 134 residues: Ribosome-binding factor A (134 aa).

Belongs to the RbfA family. In terms of assembly, monomer. Binds 30S ribosomal subunits, but not 50S ribosomal subunits or 70S ribosomes.

The protein resides in the cytoplasm. Its function is as follows. One of several proteins that assist in the late maturation steps of the functional core of the 30S ribosomal subunit. Associates with free 30S ribosomal subunits (but not with 30S subunits that are part of 70S ribosomes or polysomes). Required for efficient processing of 16S rRNA. May interact with the 5'-terminal helix region of 16S rRNA. The chain is Ribosome-binding factor A from Psychrobacter arcticus (strain DSM 17307 / VKM B-2377 / 273-4).